We begin with the raw amino-acid sequence, 734 residues long: Photosystem I P700 chlorophyll a apoprotein A2 (734 aa).

Helical transmembrane passes span 46-69 (IFAS…FHVA), 135-158 (LYTG…LHLQ), 175-199 (LNHH…HVAI), 273-291 (IAHH…GHMY), 330-353 (IHFQ…QHMY), 369-395 (AALY…IFFI), 417-439 (AIIS…LYVH), and 517-535 (FLVH…LILV). [4Fe-4S] cluster-binding residues include Cys-559 and Cys-568. A run of 2 helical transmembrane segments spans residues 575–596 (AFYL…YWHW) and 643–665 (LSVW…MFLI). Chlorophyll a is bound by residues His-654, Met-662, and Tyr-670. Trp-671 contributes to the phylloquinone binding site. A helical membrane pass occupies residues 707–727 (LVGLAHFSVGYIFTYAAFLIA).

Belongs to the PsaA/PsaB family. The PsaA/B heterodimer binds the P700 chlorophyll special pair and subsequent electron acceptors. PSI consists of a core antenna complex that captures photons, and an electron transfer chain that converts photonic excitation into a charge separation. The eukaryotic PSI reaction center is composed of at least 11 subunits. The cofactor is P700 is a chlorophyll a/chlorophyll a' dimer, A0 is one or more chlorophyll a, A1 is one or both phylloquinones and FX is a shared 4Fe-4S iron-sulfur center..

The protein localises to the plastid. It is found in the chloroplast thylakoid membrane. It carries out the reaction reduced [plastocyanin] + hnu + oxidized [2Fe-2S]-[ferredoxin] = oxidized [plastocyanin] + reduced [2Fe-2S]-[ferredoxin]. PsaA and PsaB bind P700, the primary electron donor of photosystem I (PSI), as well as the electron acceptors A0, A1 and FX. PSI is a plastocyanin-ferredoxin oxidoreductase, converting photonic excitation into a charge separation, which transfers an electron from the donor P700 chlorophyll pair to the spectroscopically characterized acceptors A0, A1, FX, FA and FB in turn. Oxidized P700 is reduced on the lumenal side of the thylakoid membrane by plastocyanin. The protein is Photosystem I P700 chlorophyll a apoprotein A2 of Aethionema cordifolium (Lebanon stonecress).